Here is a 319-residue protein sequence, read N- to C-terminus: Beta-ketoacyl-[acyl-carrier-protein] synthase III (319 aa).

Catalysis depends on residues Cys-112 and His-246. Residues 247-251 are ACP-binding; that stretch reads QANFR. Asn-276 is an active-site residue.

Belongs to the thiolase-like superfamily. FabH family. As to quaternary structure, homodimer.

It localises to the cytoplasm. It catalyses the reaction malonyl-[ACP] + acetyl-CoA + H(+) = 3-oxobutanoyl-[ACP] + CO2 + CoA. The protein operates within lipid metabolism; fatty acid biosynthesis. Its function is as follows. Catalyzes the condensation reaction of fatty acid synthesis by the addition to an acyl acceptor of two carbons from malonyl-ACP. Catalyzes the first condensation reaction which initiates fatty acid synthesis and may therefore play a role in governing the total rate of fatty acid production. Possesses both acetoacetyl-ACP synthase and acetyl transacylase activities. Its substrate specificity determines the biosynthesis of branched-chain and/or straight-chain of fatty acids. This Pseudoalteromonas atlantica (strain T6c / ATCC BAA-1087) protein is Beta-ketoacyl-[acyl-carrier-protein] synthase III.